The chain runs to 413 residues: NAD-dependent dihydropyrimidine dehydrogenase subunit PreT homolog (413 aa).

Glutamate 287 lines the NAD(+) pocket.

This sequence belongs to the NADH dehydrogenase family. As to quaternary structure, heterotetramer of 2 PreA and 2 PreT subunits.

The enzyme catalyses 5,6-dihydrouracil + NAD(+) = uracil + NADH + H(+). It catalyses the reaction 5,6-dihydrothymine + NAD(+) = thymine + NADH + H(+). Involved in pyrimidine base degradation. Catalyzes physiologically the reduction of uracil to 5,6-dihydrouracil (DHU) by using NADH as a specific cosubstrate. It also catalyzes the reverse reaction and the reduction of thymine to 5,6-dihydrothymine (DHT). This chain is NAD-dependent dihydropyrimidine dehydrogenase subunit PreT homolog (preT), found in Salmonella typhi.